We begin with the raw amino-acid sequence, 217 residues long: Oxygen-evolving enhancer protein 3-1, chloroplastic (217 aa).

The N-terminal 68 residues, 1–68, are a transit peptide targeting the chloroplast; it reads MAQAMASMTG…GGALSQAARA (68 aa).

The protein belongs to the PsbQ family.

It localises to the plastid. The protein resides in the chloroplast thylakoid membrane. The chain is Oxygen-evolving enhancer protein 3-1, chloroplastic (PSBQ1) from Zea mays (Maize).